A 398-amino-acid chain; its full sequence is Secreted aspartic protease 2 (398 aa).

Residues 1-18 form the signal peptide; that stretch reads MFLKNIFIALAIALLVDA. A propeptide spans 19-56 (activation peptide); it reads TPTTTKRSAGFVALDFSVVKTPKAFPVTNGQEGKTSKR. The 315-residue stretch at 70-384 folds into the Peptidase A1 domain; the sequence is YAADITVGSN…DLDDNEISLA (315 aa). Asp88 is a catalytic residue. 88–90 lines the pepstatin A pocket; it reads DTG. Residues Cys103 and Cys115 are joined by a disulfide bond. A pepstatin A-binding site is contributed by 141–142; sequence GD. 2 residues coordinate Zn(2+): Asp247 and Asp270. Asp274 is an active-site residue. 274–278 contributes to the pepstatin A binding site; it reads DSGTT. The cysteines at positions 312 and 350 are disulfide-linked. Asn313 and Asn321 each carry an N-linked (GlcNAc...) asparagine glycan.

It belongs to the peptidase A1 family. As to quaternary structure, monomer.

The protein resides in the secreted. The enzyme catalyses Preferential cleavage at the carboxyl of hydrophobic amino acids, but fails to cleave 15-Leu-|-Tyr-16, 16-Tyr-|-Leu-17 and 24-Phe-|-Phe-25 of insulin B chain. Activates trypsinogen, and degrades keratin.. Its function is as follows. Secreted aspartic peptidases (SAPs) are a group of ten acidic hydrolases considered as key virulence factors. These enzymes supply the fungus with nutrient amino acids as well as are able to degrade the selected host's proteins involved in the immune defense. Induces host inflammatory cytokine production in a proteolytic activity-independent way. Plays a role in tissue damage during superficial infection. Moreover, acts toward human hemoglobin though limited proteolysis to generate a variety of antimicrobial hemocidins, enabling to compete with the other microorganisms of the same physiological niche using the microbicidal peptides generated from the host protein. In terms of biological role, plays a key role in defense against host by cleaving histatin-5 (Hst 5), a peptide from human saliva that carries out fungicidal activity. The cleavage rate decreases in an order of SAP2 &gt; SAP9 &gt; SAP3 &gt; SAP7 &gt; SAP4 &gt; SAP1 &gt; SAP8. The first cleavage occurs between residues 'Lys-17' and 'His-18' of Hst 5, giving DSHAKRHHGYKRKFHEK and HHSHRGY peptides. Simultaneously, the DSHAKRHHGYKRK peptide is also formed. Further fragmentation by SAP2 results in FHEK and DSHAKRHHGY products. This chain is Secreted aspartic protease 2, found in Candida albicans (strain SC5314 / ATCC MYA-2876) (Yeast).